A 397-amino-acid polypeptide reads, in one-letter code: CCA-adding enzyme (397 aa).

Positions 26 and 29 each coordinate ATP. Positions 26 and 29 each coordinate CTP. Asp39 and Asp41 together coordinate Mg(2+). Residues Arg110, Asp153, Arg156, Arg159, and Arg162 each contribute to the ATP site. Positions 110, 153, 156, 159, and 162 each coordinate CTP.

This sequence belongs to the tRNA nucleotidyltransferase/poly(A) polymerase family. Bacterial CCA-adding enzyme type 3 subfamily. As to quaternary structure, homodimer. Requires Mg(2+) as cofactor.

It catalyses the reaction a tRNA precursor + 2 CTP + ATP = a tRNA with a 3' CCA end + 3 diphosphate. The catalysed reaction is a tRNA with a 3' CCA end + 2 CTP + ATP = a tRNA with a 3' CCACCA end + 3 diphosphate. In terms of biological role, catalyzes the addition and repair of the essential 3'-terminal CCA sequence in tRNAs without using a nucleic acid template. Adds these three nucleotides in the order of C, C, and A to the tRNA nucleotide-73, using CTP and ATP as substrates and producing inorganic pyrophosphate. tRNA 3'-terminal CCA addition is required both for tRNA processing and repair. Also involved in tRNA surveillance by mediating tandem CCA addition to generate a CCACCA at the 3' terminus of unstable tRNAs. While stable tRNAs receive only 3'-terminal CCA, unstable tRNAs are marked with CCACCA and rapidly degraded. This chain is CCA-adding enzyme, found in Bacillus cytotoxicus (strain DSM 22905 / CIP 110041 / 391-98 / NVH 391-98).